The primary structure comprises 244 residues: Mannose-binding protein C (244 aa).

The first 18 residues, 1-18, serve as a signal peptide directing secretion; the sequence is MSLFTSFLLLCVLTAVYA. The Collagen-like domain occupies 38 to 96; sequence GLNGFPGKDGHDGAKGEKGEPGQGLRGLQGPPGKVGPAGPPGNPGSKGATGPKGDRGES. The residue at position 43 (Pro-43) is a 4-hydroxyproline. The interval 43–99 is disordered; that stretch reads PGKDGHDGAKGEKGEPGQGLRGLQGPPGKVGPAGPPGNPGSKGATGPKGDRGESVEF. Over residues 45–57 the composition is skewed to basic and acidic residues; that stretch reads KDGHDGAKGEKGE. 4 positions are modified to 4-hydroxyproline: Pro-58, Pro-69, Pro-78, and Pro-81. The segment covering 65 to 74 has biased composition (low complexity); sequence LQGPPGKVGP. Residues 108 to 126 are a coiled coil; the sequence is IAALRSELRAMRKWVLLSM. In terms of domain architecture, C-type lectin spans 129–241; sequence NVGKKYFMSS…CSDSFLVVCE (113 aa). 2 disulfide bridges follow: Cys-151–Cys-240 and Cys-218–Cys-232.

Oligomeric complex of 3 or more homotrimers. Interacts with MASP1 and MASP2. Interacts with MEP1A and MEP1B and may inhibit their catalytic activity.

It localises to the secreted. Its function is as follows. Calcium-dependent lectin involved in innate immune defense. Binds mannose, fucose and N-acetylglucosamine on different microorganisms and activates the lectin complement pathway. Binds to late apoptotic cells, as well as to apoptotic blebs and to necrotic cells, but not to early apoptotic cells, facilitating their uptake by macrophages. The sequence is that of Mannose-binding protein C (Mbl2) from Rattus norvegicus (Rat).